The primary structure comprises 548 residues: Probable malate:quinone oxidoreductase (548 aa).

Belongs to the MQO family. It depends on FAD as a cofactor.

It catalyses the reaction (S)-malate + a quinone = a quinol + oxaloacetate. The protein operates within carbohydrate metabolism; tricarboxylic acid cycle; oxaloacetate from (S)-malate (quinone route): step 1/1. The protein is Probable malate:quinone oxidoreductase of Escherichia coli O127:H6 (strain E2348/69 / EPEC).